The chain runs to 313 residues: 3'-5' exoribonuclease YhaM (313 aa).

The 117-residue stretch at 163-279 (HVVSMLRLAK…LHQIDLMDAS (117 aa)) folds into the HD domain.

Belongs to the YhaM family.

Functionally, shows a 3'-5' exoribonuclease activity. In Listeria monocytogenes serotype 4b (strain CLIP80459), this protein is 3'-5' exoribonuclease YhaM.